The sequence spans 924 residues: Lon protease homolog 3, mitochondrial (924 aa).

A mitochondrion-targeting transit peptide spans 1–63 (MMPKRFNTSG…PVQSLLLFRA (63 aa)). Residues 112–325 (VIALPLPHKP…LTLELVKKQV (214 aa)) enclose the Lon N-terminal domain. 447-454 (GPPGVGKT) provides a ligand contact to ATP. The Lon proteolytic domain occupies 738-922 (QTPVGVVMGL…EKIFDLAFNY (185 aa)). Residues S828 and K871 contribute to the active site.

Belongs to the peptidase S16 family. Homohexamer or homoheptamer. Organized in a ring with a central cavity.

The protein localises to the mitochondrion matrix. The enzyme catalyses Hydrolysis of proteins in presence of ATP.. Functionally, ATP-dependent serine protease that mediates the selective degradation of misfolded, unassembled or oxidatively damaged polypeptides as well as certain short-lived regulatory proteins in the mitochondrial matrix. May also have a chaperone function in the assembly of inner membrane protein complexes. Participates in the regulation of mitochondrial gene expression and in the maintenance of the integrity of the mitochondrial genome. Binds to mitochondrial DNA in a site-specific manner. The sequence is that of Lon protease homolog 3, mitochondrial (LON3) from Arabidopsis thaliana (Mouse-ear cress).